A 647-amino-acid polypeptide reads, in one-letter code: Microtubule-associated protein 9 (647 aa).

Residue serine 2 is modified to N-acetylserine. Tyrosine 12 bears the Phosphotyrosine mark. 6 disordered regions span residues 127 to 323 (KSFS…ELIM), 344 to 421 (SATA…PDRA), 491 to 514 (KRLE…EALQ), 530 to 553 (KNRK…AEKK), 580 to 600 (NEKR…KQAI), and 613 to 647 (QERI…AKVF). Positions 133–145 (QNKDEEFEKDKIK) are enriched in basic and acidic residues. Over residues 155 to 166 (IKSTSSAENNSL) the composition is skewed to polar residues. Over residues 174–186 (PSPRPRSMLKKKS) the composition is skewed to basic residues. A coiled-coil region spans residues 184–210 (KKSHMEEKDGLEDKETALSEELELHSA). A compositionally biased stretch (basic and acidic residues) spans 187–200 (HMEEKDGLEDKETA). 2 stretches are compositionally biased toward polar residues: residues 210 to 219 (APSSLPTPNG) and 239 to 249 (CLTSLASSSLK). The segment covering 268–287 (DPNEEITENHNSLKSDENKE) has biased composition (basic and acidic residues). Residues 298-328 (AVEKSKESQVTADDLEEEKAKAELIMDDDRT) adopt a coiled-coil conformation. Residues 365-374 (NNRASSASAR) show a composition bias toward low complexity. A coiled-coil region spans residues 443 to 628 (MHRIKRIESE…KQKKRHSFLE (186 aa)).

Binds to purified microtubules via its C-terminus.

The protein localises to the cytoplasm. It localises to the cytoskeleton. Its subcellular location is the spindle. In terms of biological role, involved in organization of the bipolar mitotic spindle. Required for bipolar spindle assembly, mitosis progression and cytokinesis. May act by stabilizing interphase microtubules. The chain is Microtubule-associated protein 9 (MAP9) from Homo sapiens (Human).